We begin with the raw amino-acid sequence, 386 residues long: Indole-3-acetate O-methyltransferase 1 (386 aa).

Y30 is an S-adenosyl-L-methionine binding site. Residues Y30 and 33–37 (NSQAQ) contribute to the substrate site. S-adenosyl-L-methionine contacts are provided by residues G72, 72 to 73 (GC), N78, 108 to 111 (FSDL), D110, 152 to 154 (SFY), and 169 to 171 (AFS). 170–174 (FSLHW) provides a ligand contact to substrate. Mg(2+) contacts are provided by N191, V195, R277, D278, F280, and N281. S334 lines the substrate pocket.

Belongs to the methyltransferase superfamily. SABATH family. In terms of assembly, homodimer. Requires Mg(2+) as cofactor. Expressed in seedling roots and leaves. Expressed in the stigma, funiculus, and vascular bundles in sepals, petals and stamens.

It carries out the reaction (indol-3-yl)acetate + S-adenosyl-L-methionine = methyl (indol-3-yl)acetate + S-adenosyl-L-homocysteine. Catalyzes the methylation of the free carboxyl end of the plant hormone indole-3-acetic acid (IAA). Converts IAA to IAA methyl ester (MeIAA). Regulates IAA activities by IAA methylation. Methylation of IAA plays an important role in regulating plant development and auxin homeostasis. Required for correct leaf pattern formation. MeIAA seems to be an inactive form of IAA. This is Indole-3-acetate O-methyltransferase 1 (IAMT1) from Arabidopsis thaliana (Mouse-ear cress).